The chain runs to 238 residues: 3-deoxy-manno-octulosonate cytidylyltransferase (238 aa).

It belongs to the KdsB family.

The protein resides in the cytoplasm. It catalyses the reaction 3-deoxy-alpha-D-manno-oct-2-ulosonate + CTP = CMP-3-deoxy-beta-D-manno-octulosonate + diphosphate. Its pathway is nucleotide-sugar biosynthesis; CMP-3-deoxy-D-manno-octulosonate biosynthesis; CMP-3-deoxy-D-manno-octulosonate from 3-deoxy-D-manno-octulosonate and CTP: step 1/1. It functions in the pathway bacterial outer membrane biogenesis; lipopolysaccharide biosynthesis. Activates KDO (a required 8-carbon sugar) for incorporation into bacterial lipopolysaccharide in Gram-negative bacteria. The polypeptide is 3-deoxy-manno-octulosonate cytidylyltransferase (Nitratiruptor sp. (strain SB155-2)).